Reading from the N-terminus, the 463-residue chain is Chromosomal replication initiator protein DnaA (463 aa).

Positions 1–83 (MSTNQIILTD…LQLFQHYNNT (83 aa)) are domain I, interacts with DnaA modulators. The segment at 83–124 (TIKSIEIITKELPGTTQTVIELPTKTFADIGSSELNSENIFS) is domain II. Residues 125 to 343 (TLDVRFTFDN…GALNKVIAHS (219 aa)) are domain III, AAA+ region. Residues Gly-171, Gly-173, Lys-174, and Thr-175 each coordinate ATP. The domain IV, binds dsDNA stretch occupies residues 344 to 463 (NFTLKEITLE…INLLMKILQN (120 aa)).

It belongs to the DnaA family. As to quaternary structure, oligomerizes as a right-handed, spiral filament on DNA at oriC.

The protein resides in the cytoplasm. Functionally, plays an essential role in the initiation and regulation of chromosomal replication. ATP-DnaA binds to the origin of replication (oriC) to initiate formation of the DNA replication initiation complex once per cell cycle. Binds the DnaA box (a 9 base pair repeat at the origin) and separates the double-stranded (ds)DNA. Forms a right-handed helical filament on oriC DNA; dsDNA binds to the exterior of the filament while single-stranded (ss)DNA is stabiized in the filament's interior. The ATP-DnaA-oriC complex binds and stabilizes one strand of the AT-rich DNA unwinding element (DUE), permitting loading of DNA polymerase. After initiation quickly degrades to an ADP-DnaA complex that is not apt for DNA replication. Binds acidic phospholipids. This is Chromosomal replication initiator protein DnaA from Rickettsia felis (strain ATCC VR-1525 / URRWXCal2) (Rickettsia azadi).